We begin with the raw amino-acid sequence, 206 residues long: Recombination protein RecR (206 aa).

A C4-type zinc finger spans residues 60–75 (CAMCNTFCEGGLCDIC). Residues 83–178 (RRLMVVHMPA…KVSRLSQGIP (96 aa)) enclose the Toprim domain.

It belongs to the RecR family.

Its function is as follows. May play a role in DNA repair. It seems to be involved in an RecBC-independent recombinational process of DNA repair. It may act with RecF and RecO. The polypeptide is Recombination protein RecR (Neisseria meningitidis serogroup B (strain ATCC BAA-335 / MC58)).